A 438-amino-acid polypeptide reads, in one-letter code: Putative cytochrome P450 140 (438 aa).

Residue C381 participates in heme binding.

It belongs to the cytochrome P450 family. It depends on heme as a cofactor.

This Mycobacterium bovis (strain ATCC BAA-935 / AF2122/97) protein is Putative cytochrome P450 140 (cyp140).